Here is a 360-residue protein sequence, read N- to C-terminus: Squamosa promoter-binding-like protein 7 (360 aa).

Over residues 74–89 (AQGSGGGGGGGGGGSA) the composition is skewed to gly residues. Residues 74–98 (AQGSGGGGGGGGGGSADQGKRKEKA) form a disordered region. The SBP-type zinc finger occupies 105-182 (VPRCQVEGCD…AGHNERRRRS (78 aa)). Residues Cys108, Cys113, Cys130, His133, Cys149, Cys152, His156, and Cys168 each contribute to the Zn(2+) site. The Bipartite nuclear localization signal signature appears at 165–181 (KKSCRRRLAGHNERRRR). Residues 172–182 (LAGHNERRRRS) are compositionally biased toward basic residues. 3 disordered regions span residues 172–196 (LAGH…AHPH), 261–306 (FFSD…HEHQ), and 320–360 (AAGG…ARVV).

Expressed in young panicles.

It localises to the nucleus. Trans-acting factor that binds specifically to the consensus nucleotide sequence 5'-TNCGTACAA-3'. May be involved in panicle development. The chain is Squamosa promoter-binding-like protein 7 (SPL7) from Oryza sativa subsp. indica (Rice).